Reading from the N-terminus, the 513-residue chain is Transmembrane protein 151B (513 aa).

A disordered region spans residues 1 to 29 (MSPAAPVTESSAAEVHREQTDAPREPQRP). Positions 14-28 (EVHREQTDAPREPQR) are enriched in basic and acidic residues. A run of 3 helical transmembrane segments spans residues 46-66 (CLLLSLLMYCCVIAMTWCQVT), 93-113 (YIYIPVAFLVMLYVVYLVECW), and 274-294 (LPWYASTCSFWLAAAFTLSWP). Asn-366, Asn-418, and Asn-505 each carry an N-linked (GlcNAc...) asparagine glycan.

It belongs to the TMEM151 family.

It is found in the membrane. This chain is Transmembrane protein 151B (tmem151b), found in Danio rerio (Zebrafish).